The sequence spans 108 residues: uncharacterized protein (108 aa).

A Phosphothreonine modification is found at threonine 56. The tract at residues 89-108 (AQAKGTEQAEALKKGTSKWF) is disordered.

It is found in the cytoplasm. This is an uncharacterized protein from Schizosaccharomyces pombe (strain 972 / ATCC 24843) (Fission yeast).